The sequence spans 221 residues: Ras-related protein RABA5a (221 aa).

A GTP-binding site is contributed by 21–28; it reads GDSAVGKS. The Effector region motif lies at 43-51; sequence SKSTIGVEF. GTP-binding positions include 69–73, 127–130, and 157–158; these read DTAGQ, NKSD, and SA. Residues Cys218 and Cys219 are each lipidated (S-geranylgeranyl cysteine).

This sequence belongs to the small GTPase superfamily. Rab family.

The protein localises to the cell membrane. Its function is as follows. Intracellular vesicle trafficking and protein transport. The polypeptide is Ras-related protein RABA5a (RABA5A) (Arabidopsis thaliana (Mouse-ear cress)).